The following is a 373-amino-acid chain: MENIVQSKPIIELRSLKKSYNENTIIDNFNLTINNGEFLTILGPSGCGKTTVLRLIAGFEEANGGQIILDGEDVTDLPAEHRPVNTVFQSYALFPHMTIFENVAFGLRMQKVPNEEIKPRVLEALRMVQLEEMADRKPTQLSGGQQQRIAIARAVVNKPKVLLLDESLSALDYKLRKQMQNELKALQRKLGITFIFVTHDQEEALTMSDRIIVLRKGNIEQDGSPREIYEEPSNLFVAKFIGEINIFDAQVLNRVDEKRVRANVEGRVCDIYTDLAVKEGQKLKVLLRPEDVQLEELDENEQSSAIIGHIRERNYKGMTLESTVELEHNNKLVLVSEFFNEDDPNIDHSLDQRVGVTWIEKWEVVLNDENDNA.

Residues 11-241 (IELRSLKKSY…PSNLFVAKFI (231 aa)) enclose the ABC transporter domain. 43-50 (GPSGCGKT) is an ATP binding site.

It belongs to the ABC transporter superfamily. Spermidine/putrescine importer (TC 3.A.1.11.1) family. As to quaternary structure, the complex is composed of two ATP-binding proteins (PotA), two transmembrane proteins (PotB and PotC) and a solute-binding protein (PotD).

It is found in the cell inner membrane. The catalysed reaction is ATP + H2O + polyamine-[polyamine-binding protein]Side 1 = ADP + phosphate + polyamineSide 2 + [polyamine-binding protein]Side 1.. Its function is as follows. Part of the ABC transporter complex PotABCD involved in spermidine/putrescine import. Responsible for energy coupling to the transport system. The polypeptide is Spermidine/putrescine import ATP-binding protein PotA (Mannheimia succiniciproducens (strain KCTC 0769BP / MBEL55E)).